Here is a 222-residue protein sequence, read N- to C-terminus: Phosphoglycolate phosphatase (222 aa).

D8 functions as the Nucleophile in the catalytic mechanism. The Mg(2+) site is built by D8 and D10. Residue K146 coordinates substrate. Mg(2+) contacts are provided by D169 and D173.

Belongs to the archaeal SPP-like hydrolase family. Requires Mg(2+) as cofactor.

The catalysed reaction is 2-phosphoglycolate + H2O = glycolate + phosphate. Functionally, catalyzes the dephosphorylation of 2-phosphoglycolate. The sequence is that of Phosphoglycolate phosphatase from Methanothrix thermoacetophila (strain DSM 6194 / JCM 14653 / NBRC 101360 / PT) (Methanosaeta thermophila).